We begin with the raw amino-acid sequence, 440 residues long: Probable aldose 1-epimerase ARB_05372 (440 aa).

A signal peptide spans 1–24 (MCGVLRQLMLLLLAFLSITPSCSA). N-linked (GlcNAc...) asparagine glycosylation is found at N32, N38, N43, N68, and N112. 125 to 126 (NR) provides a ligand contact to substrate. N-linked (GlcNAc...) asparagine glycosylation is found at N129, N147, N163, N171, and N199. Residue H233 is the Proton donor of the active site. Residues N243, N275, N281, and N306 are each glycosylated (N-linked (GlcNAc...) asparagine). Substrate is bound at residue D311. 4 N-linked (GlcNAc...) asparagine glycosylation sites follow: N321, N337, N365, and N385. The active-site Proton acceptor is E401.

It belongs to the aldose epimerase family. As to quaternary structure, monomer.

Its subcellular location is the secreted. The catalysed reaction is alpha-D-glucose = beta-D-glucose. The protein operates within carbohydrate metabolism; hexose metabolism. Functionally, mutarotase converts alpha-aldose to the beta-anomer. It is active on D-glucose, L-arabinose, D-xylose, D-galactose, maltose and lactose. The polypeptide is Probable aldose 1-epimerase ARB_05372 (Arthroderma benhamiae (strain ATCC MYA-4681 / CBS 112371) (Trichophyton mentagrophytes)).